The primary structure comprises 480 residues: Glycerol 3-phosphate dehydrogenase (480 aa).

FAD is bound by residues Ile12, Glu31, 40–41 (TT), and 45–47 (SAI). Sn-glycerol 3-phosphate-binding residues include Ser45 and His49. His49 functions as the Proton acceptor in the catalytic mechanism. Val172 contributes to the FAD binding site. Residues Lys249 and Arg310 each coordinate sn-glycerol 3-phosphate. Position 335–336 (335–336 (IE)) interacts with FAD. Ser337 is a sn-glycerol 3-phosphate binding site. Residue Ser341 coordinates FAD. [2Fe-2S] cluster is bound by residues Cys400, Cys402, Cys437, and Cys442.

[2Fe-2S] cluster is required as a cofactor.

The enzyme catalyses sn-glycerol 3-phosphate + A = dihydroxyacetone phosphate + AH2. It participates in polyol metabolism; glycerol degradation via glycerol kinase pathway; glycerone phosphate from sn-glycerol 3-phosphate (aerobic route): step 1/1. Its function is as follows. Catalyzes the dehydrogenation of glycerol 3-phosphate to dihydroxyacetone phosphate. Is probably involved in anaerobic glycerol metabolism. Active in vitro with the artificial electron acceptor 2,6-dichlorophenolindophenol (DCPIP), but not with NAD or NADP. Also displays a very low oxidase activity in vitro on glycerol 3-phosphate with O2 as the electron acceptor, but this activity is most likely not physiological. The sequence is that of Glycerol 3-phosphate dehydrogenase from Caloramator mitchellensis.